Here is a 550-residue protein sequence, read N- to C-terminus: MFCVQCEQTIRTPAGNGCSYAQGMCGKTAETSDLQDLLIAALQGLSAWAVKAREYGIINHDVDNFAPRAFFSTLTNVNFDSPRIVGYAREAIALREALKAQCLSVDANAHCDNPMADLQLVSDDLGELQRQAAEFTPNKDKAAIGENILGLRLLCLYGLKGAAAYMEHAHVLGQYDNDIYAQYHKIMAWLGTWPADMNALLECAMEIGQMNFKVMSILDAGETTKYGHPTPTQVNVKATEGKCILISGHDLKDLYNLLEQTEGTGVNVYTHGEMLPAHGYPELRKFKHLVGNYGSGWQNQQVEFARFPGPIVMTSNCIIDPTVGSYDDRIWTRSIVGWPGVSHLEGDDFGPVIAQAQQMAGFPYSEIPHLITVGFGRQTLLGAADTLIDLVSRKKLRHIFLVGGCDGARGERNYFTDFATSVPDDCLILTLACGKYRFNKLEFGDIEGLPRLVDAGQCNDAYSAIILAVTLAEKLGCGVNDLPLSLVLSWFEQKAIVILLTLLSLGVKNIVTGPTAPGFFTPDLLAILNEKFGLRSVTTVEEDMKQLLSA.

Cysteine 3, cysteine 6, cysteine 18, and cysteine 25 together coordinate [2Fe-2S] cluster. Positions 249, 273, 317, 405, 433, 458, 492, and 494 each coordinate hybrid [4Fe-2O-2S] cluster. Cysteine 405 carries the cysteine persulfide modification.

The protein belongs to the HCP family. It depends on [2Fe-2S] cluster as a cofactor. Hybrid [4Fe-2O-2S] cluster is required as a cofactor.

The protein localises to the cytoplasm. It carries out the reaction A + NH4(+) + H2O = hydroxylamine + AH2 + H(+). In terms of biological role, catalyzes the reduction of hydroxylamine to form NH(3) and H(2)O. This is Hydroxylamine reductase from Salmonella schwarzengrund (strain CVM19633).